A 433-amino-acid polypeptide reads, in one-letter code: Serine hydroxymethyltransferase (433 aa).

Residues Leu132 and 136–138 (GHL) each bind (6S)-5,6,7,8-tetrahydrofolate. N6-(pyridoxal phosphate)lysine is present on Lys241.

Belongs to the SHMT family. In terms of assembly, homodimer. The cofactor is pyridoxal 5'-phosphate.

The protein localises to the cytoplasm. The enzyme catalyses (6R)-5,10-methylene-5,6,7,8-tetrahydrofolate + glycine + H2O = (6S)-5,6,7,8-tetrahydrofolate + L-serine. Its pathway is one-carbon metabolism; tetrahydrofolate interconversion. The protein operates within amino-acid biosynthesis; glycine biosynthesis; glycine from L-serine: step 1/1. Functionally, catalyzes the reversible interconversion of serine and glycine with tetrahydrofolate (THF) serving as the one-carbon carrier. This reaction serves as the major source of one-carbon groups required for the biosynthesis of purines, thymidylate, methionine, and other important biomolecules. Also exhibits THF-independent aldolase activity toward beta-hydroxyamino acids, producing glycine and aldehydes, via a retro-aldol mechanism. This Nitrobacter winogradskyi (strain ATCC 25391 / DSM 10237 / CIP 104748 / NCIMB 11846 / Nb-255) protein is Serine hydroxymethyltransferase.